Consider the following 289-residue polypeptide: Pantothenate synthetase (289 aa).

30 to 37 (MGYLHEGH) is an ATP binding site. Residue H37 is the Proton donor of the active site. Q61 lines the (R)-pantoate pocket. A beta-alanine-binding site is contributed by Q61. 147 to 150 (GLKD) contacts ATP. Q153 lines the (R)-pantoate pocket. Residues V176 and 184–187 (KSSR) each bind ATP.

This sequence belongs to the pantothenate synthetase family. In terms of assembly, homodimer.

Its subcellular location is the cytoplasm. It carries out the reaction (R)-pantoate + beta-alanine + ATP = (R)-pantothenate + AMP + diphosphate + H(+). The protein operates within cofactor biosynthesis; (R)-pantothenate biosynthesis; (R)-pantothenate from (R)-pantoate and beta-alanine: step 1/1. Catalyzes the condensation of pantoate with beta-alanine in an ATP-dependent reaction via a pantoyl-adenylate intermediate. The chain is Pantothenate synthetase from Geobacillus thermodenitrificans (strain NG80-2).